The sequence spans 105 residues: Phosphoribosyl-AMP cyclohydrolase (105 aa).

A Mg(2+)-binding site is contributed by Asp-72. Position 73 (Cys-73) interacts with Zn(2+). Mg(2+) contacts are provided by Asp-74 and Asp-76. Cys-89 and Cys-96 together coordinate Zn(2+).

Belongs to the PRA-CH family. As to quaternary structure, homodimer. Mg(2+) is required as a cofactor. Zn(2+) serves as cofactor.

The protein resides in the cytoplasm. It catalyses the reaction 1-(5-phospho-beta-D-ribosyl)-5'-AMP + H2O = 1-(5-phospho-beta-D-ribosyl)-5-[(5-phospho-beta-D-ribosylamino)methylideneamino]imidazole-4-carboxamide. It participates in amino-acid biosynthesis; L-histidine biosynthesis; L-histidine from 5-phospho-alpha-D-ribose 1-diphosphate: step 3/9. Its function is as follows. Catalyzes the hydrolysis of the adenine ring of phosphoribosyl-AMP. This Listeria monocytogenes serotype 4a (strain HCC23) protein is Phosphoribosyl-AMP cyclohydrolase.